A 112-amino-acid polypeptide reads, in one-letter code: Large ribosomal subunit protein P1 (112 aa).

Positions 71–90 (PAQAAAAAPAGGAPAAAAPA) are enriched in low complexity. The tract at residues 71–112 (PAQAAAAAPAGGAPAAAAPAESKEGRRSQGESDDDMGFGLLD) is disordered. Over residues 91–100 (ESKEGRRSQG) the composition is skewed to basic and acidic residues.

Belongs to the eukaryotic ribosomal protein P1/P2 family. In terms of assembly, P1 and P2 exist as dimers at the large ribosomal subunit.

Plays an important role in the elongation step of protein synthesis. In Oscheius tipulae, this protein is Large ribosomal subunit protein P1 (rpl-21).